Here is a 203-residue protein sequence, read N- to C-terminus: Small ribosomal subunit protein uS7 (203 aa).

A disordered region spans residues M1–K22.

Belongs to the universal ribosomal protein uS7 family. As to quaternary structure, part of the 30S ribosomal subunit.

One of the primary rRNA binding proteins, it binds directly to 16S rRNA where it nucleates assembly of the head domain of the 30S subunit. Is located at the subunit interface close to the decoding center. This is Small ribosomal subunit protein uS7 from Halococcus morrhuae (Micrococcus morrhuae).